We begin with the raw amino-acid sequence, 234 residues long: tRNA1(Val) (adenine(37)-N6)-methyltransferase (234 aa).

Belongs to the methyltransferase superfamily. tRNA (adenine-N(6)-)-methyltransferase family.

It localises to the cytoplasm. It catalyses the reaction adenosine(37) in tRNA1(Val) + S-adenosyl-L-methionine = N(6)-methyladenosine(37) in tRNA1(Val) + S-adenosyl-L-homocysteine + H(+). Its function is as follows. Specifically methylates the adenine in position 37 of tRNA(1)(Val) (anticodon cmo5UAC). This chain is tRNA1(Val) (adenine(37)-N6)-methyltransferase, found in Aliivibrio salmonicida (strain LFI1238) (Vibrio salmonicida (strain LFI1238)).